Reading from the N-terminus, the 129-residue chain is Protein Turandot A2 (129 aa).

Residues 1–21 (MNSSTSLMCFALLLISPLCMG) form the signal peptide. N49 carries an N-linked (GlcNAc...) asparagine glycan.

The protein belongs to the Turandot family.

The protein localises to the secreted. Functionally, a humoral factor that plays a role in stress tolerance; gives increased resistance to the lethal effects of bacterial challenge and stress. Regulated by the JAK/STAT pathway and NF-KB-like Relish pathway in the fat body, upd3 in the hemocytes and Mekk1 in response to septic injury and consequent immune response. In Drosophila simulans (Fruit fly), this protein is Protein Turandot A2 (TotA2).